Consider the following 355-residue polypeptide: Membrane cofactor protein (355 aa).

The signal sequence occupies residues 1–42 (MTAAPLTPDPTHPRRRRKSYTFFSLGIYAEALLFLLSSLSDA). Sushi domains lie at 43-104 (CEPP…GCIK), 105-168 (VQCT…SCKK), 169-234 (VYCL…ECKV), and 235-294 (VKCP…QCLK). Over 43-326 (CEPPPPFEAM…GIFGQEFDAW (284 aa)) the chain is Extracellular. 6 disulfide bridges follow: Cys107–Cys149, Cys135–Cys166, Cys171–Cys219, Cys200–Cys232, Cys237–Cys279, and Cys265–Cys292. N-linked (GlcNAc...) asparagine glycosylation is present at Asn179. A glycan (O-linked (GalNAc...) threonine) is linked at Thr301. The chain crosses the membrane as a helical span at residues 327–347 (IIALIVVTSVVGVIVICLIIL). The Cytoplasmic segment spans residues 348–355 (RCSEYRKK).

Interacts with C3b. Interacts with C4b. Interacts with moesin/MSN. O-glycosylated. In terms of processing, N-glycosylated. Specifically expressed in testis. Within testis, present only in elongated spermatids and spermatozoa (at protein level).

The protein localises to the cytoplasmic vesicle. It localises to the secretory vesicle. Its subcellular location is the acrosome inner membrane. May be involved in the fusion of the spermatozoa with the oocyte during fertilization. This Rattus norvegicus (Rat) protein is Membrane cofactor protein (Cd46).